A 247-amino-acid chain; its full sequence is ATP synthase subunit a, chloroplastic (247 aa).

Helical transmembrane passes span 38-58, 95-115, 134-154, 199-219, and 220-240; these read QVLI…ILVV, VPFI…GALL, INTT…AGIS, LVVV…VMFL, and GLFT…AYIG.

The protein belongs to the ATPase A chain family. As to quaternary structure, F-type ATPases have 2 components, CF(1) - the catalytic core - and CF(0) - the membrane proton channel. CF(1) has five subunits: alpha(3), beta(3), gamma(1), delta(1), epsilon(1). CF(0) has four main subunits: a, b, b' and c.

It localises to the plastid. The protein resides in the chloroplast thylakoid membrane. Its function is as follows. Key component of the proton channel; it plays a direct role in the translocation of protons across the membrane. The sequence is that of ATP synthase subunit a, chloroplastic from Cicer arietinum (Chickpea).